A 400-amino-acid chain; its full sequence is Pyruvate dehydrogenase E1 component subunit beta-4, chloroplastic (400 aa).

Residues 1 to 34 (MAAASSLHAAPRVGSSSSFSSSSSAGRRSASAAR) form a disordered region. The N-terminal 57 residues, 1-57 (MAAASSLHAAPRVGSSSSFSSSSSAGRRSASAARSVRVAAAAGSCAARRAGGRMVAR), are a transit peptide targeting the chloroplast. Residues 9-34 (AAPRVGSSSSFSSSSSAGRRSASAAR) show a composition bias toward low complexity. Glu-136 contributes to the thiamine diphosphate binding site. K(+) is bound by residues Ile-189, Ala-237, Ile-238, and Asn-242.

As to quaternary structure, tetramer of 2 alpha and 2 beta subunits. The cofactor is thiamine diphosphate.

The protein localises to the plastid. Its subcellular location is the chloroplast. The enzyme catalyses N(6)-[(R)-lipoyl]-L-lysyl-[protein] + pyruvate + H(+) = N(6)-[(R)-S(8)-acetyldihydrolipoyl]-L-lysyl-[protein] + CO2. Its function is as follows. The pyruvate dehydrogenase complex catalyzes the overall conversion of pyruvate to acetyl-CoA and CO(2). It contains multiple copies of three enzymatic components: pyruvate dehydrogenase (E1), dihydrolipoamide acetyltransferase (E2) and lipoamide dehydrogenase (E3). The chain is Pyruvate dehydrogenase E1 component subunit beta-4, chloroplastic from Oryza sativa subsp. japonica (Rice).